Reading from the N-terminus, the 716-residue chain is Zinc finger protein on ecdysone puffs (716 aa).

2 disordered regions span residues 103–168 (PSLL…GGIR) and 182–208 (KNAN…ESPY). Basic and acidic residues predominate over residues 188–203 (KKKEPTPGEKKIESPT). A Phosphoserine modification is found at serine 201. A Phosphothreonine modification is found at threonine 203. Serine 206 is subject to Phosphoserine. The segment at 216–240 (FYCHLCKKHMWDANSFENHIKGRTH) adopts a C2H2-type 1 zinc-finger fold. The C2H2-type 2; atypical zinc-finger motif lies at 288-310 (DYCTMCDLNFHGHISTHRKSEGH). A C2H2-type 3 zinc finger spans residues 319-343 (PKCIECNKEFATRIDYDTHLLSAEH). A compositionally biased stretch (basic and acidic residues) spans 350–359 (NNTKVGERKR). The disordered stretch occupies residues 350–447 (NNTKVGERKR…EEEEVALPVD (98 aa)). The Nuclear localization signal signature appears at 379–383 (KRKKK). Residues 386–401 (KKEGEAADGEAKKEGA) are compositionally biased toward basic and acidic residues. Residues 405–414 (EGAEGDEAEG) show a composition bias toward acidic residues. Basic and acidic residues predominate over residues 415–431 (EEAKEGEEAADETKEGD). Positions 432 to 447 (ELNESQEEEEVALPVD) are enriched in acidic residues. The C2H2-type 4 zinc-finger motif lies at 489 to 513 (YECSVCSKFFDTEVTAEIHSRTATH). Residues 534–716 (RAAAALEENE…QRARGRYNRY (183 aa)) are disordered. Over residues 541–551 (ENERKKRKVEE) the composition is skewed to basic and acidic residues. Positions 544–548 (RKKRK) match the Nuclear localization signal motif. Positions 560–638 (AAEETTEGAE…GQEGEQEPEP (79 aa)) are enriched in acidic residues. The segment covering 639-656 (EPAPVQTPAPAEPAPPAK) has biased composition (pro residues). Positions 657-704 (TPAKTPTKAAAPAAVASPAAAATSADASPSPAKKATPARAAAGAKATP) are enriched in low complexity. Residues serine 673, serine 684, and serine 686 each carry the phosphoserine modification. Threonine 692 bears the Phosphothreonine mark. A compositionally biased stretch (basic residues) spans 707 to 716 (QRARGRYNRY).

It is found in the nucleus. Its subcellular location is the chromosome. May play a role in the process of early and late gene activation, or possibly in RNA processing, for a defined set of developmentally regulated loci. This Drosophila melanogaster (Fruit fly) protein is Zinc finger protein on ecdysone puffs (Pep).